Reading from the N-terminus, the 283-residue chain is uncharacterized protein (283 aa).

The HTH rpiR-type domain occupies 3 to 79 (TGGLAIIQSM…MRVAGDLAKP (77 aa)). Positions 39–58 (VNEISALANSSDAAVIRLCK) form a DNA-binding region, H-T-H motif. Positions 123–264 (AVSLLLKAHT…FLGMAAEQYE (142 aa)) constitute an SIS domain.

This is an uncharacterized protein from Bacillus subtilis (strain 168).